The sequence spans 100 residues: Cytochrome bo(3) ubiquinol oxidase subunit 4 (100 aa).

Topologically, residues 1–9 (MLKNRYLKY) are cytoplasmic. The helical transmembrane segment at 10–32 (LFILILLSILSIMPIFAIIYRIF) threads the bilayer. The Extracellular portion of the chain corresponds to 33-36 (SRNY). The helical transmembrane segment at 37–59 (LYAFIIVCLFFQILAHIKFFLNL) threads the bilayer. Residues 60–68 (DFSLEQRWK) are Cytoplasmic-facing. Residues 69–90 (LISVIFSLVVGLIILLGSIWVI) traverse the membrane as a helical segment. Residues 91–100 (KNLNNNLCIM) lie on the Extracellular side of the membrane.

This sequence belongs to the cytochrome c oxidase bacterial subunit 4 family. As to quaternary structure, heterooctamer of two A chains, two B chains, two C chains and two D chains.

Its subcellular location is the cell membrane. In terms of biological role, cytochrome bo(3) ubiquinol terminal oxidase is the component of the aerobic respiratory chain of E.coli that predominates when cells are grown at high aeration. Has proton pump activity across the membrane in addition to electron transfer, pumping 2 protons/electron. This Buchnera aphidicola subsp. Baizongia pistaciae (strain Bp) protein is Cytochrome bo(3) ubiquinol oxidase subunit 4 (cyoD).